A 298-amino-acid polypeptide reads, in one-letter code: MQLEKMITEGSNTASAEIDRVSTLEMCRIINDEDKTVPLAVDRVLPDIAAAIDVIHAQVSGGGRLIYLGAGTSGRLGILDASECPPTYGVKPGLVVGLIAGGEYAIQHAVEGAEDSREGGVNDLKNINLTAQDVVVGIAASGRTPYVIAGLEYARQLGCRTVGISCNPGSAVSTTAEFAITPIVGAEVVTGSSRMKAGTAQKLVLNMLSTGLMIKSGKVFGNLMVDVVATNEKLHVRQVNIVKNATGCNAEQAEAALIACERNCKTAIVMVLKNLDAAEAKKRLDQHGGFIRQVLDKE.

One can recognise an SIS domain in the interval 55 to 218 (IHAQVSGGGR…STGLMIKSGK (164 aa)). The active-site Proton donor is Glu-83. Glu-114 is an active-site residue.

This sequence belongs to the GCKR-like family. MurNAc-6-P etherase subfamily. Homodimer.

It catalyses the reaction N-acetyl-D-muramate 6-phosphate + H2O = N-acetyl-D-glucosamine 6-phosphate + (R)-lactate. Its pathway is amino-sugar metabolism; 1,6-anhydro-N-acetylmuramate degradation. It functions in the pathway amino-sugar metabolism; N-acetylmuramate degradation. It participates in cell wall biogenesis; peptidoglycan recycling. Specifically catalyzes the cleavage of the D-lactyl ether substituent of MurNAc 6-phosphate, producing GlcNAc 6-phosphate and D-lactate. Together with AnmK, is also required for the utilization of anhydro-N-acetylmuramic acid (anhMurNAc) either imported from the medium or derived from its own cell wall murein, and thus plays a role in cell wall recycling. The sequence is that of N-acetylmuramic acid 6-phosphate etherase from Shigella flexneri serotype 5b (strain 8401).